The chain runs to 354 residues: Alanine racemase (354 aa).

Lys33 functions as the Proton acceptor; specific for D-alanine in the catalytic mechanism. Lys33 carries the post-translational modification N6-(pyridoxal phosphate)lysine. A substrate-binding site is contributed by Arg127. The active-site Proton acceptor; specific for L-alanine is Tyr251. A substrate-binding site is contributed by Met299.

It belongs to the alanine racemase family. The cofactor is pyridoxal 5'-phosphate.

The enzyme catalyses L-alanine = D-alanine. Its pathway is amino-acid biosynthesis; D-alanine biosynthesis; D-alanine from L-alanine: step 1/1. In terms of biological role, catalyzes the interconversion of L-alanine and D-alanine. May also act on other amino acids. The protein is Alanine racemase (alr) of Fusobacterium nucleatum subsp. nucleatum (strain ATCC 25586 / DSM 15643 / BCRC 10681 / CIP 101130 / JCM 8532 / KCTC 2640 / LMG 13131 / VPI 4355).